We begin with the raw amino-acid sequence, 211 residues long: HTH-type transcriptional regulator AlkX (211 aa).

Positions 22–82 (ALLRDSVLDA…GYALRLADRL (61 aa)) constitute an HTH tetR-type domain. Residues 45–64 (TLSDVARAAGISRQTIYNEF) constitute a DNA-binding region (H-T-H motif).

As to quaternary structure, homodimer.

Its subcellular location is the cytoplasm. With respect to regulation, DNA-binding activity may be regulated by fatty acids. Represses the expression of the alkB-rubAB operon, which encodes the alkane hydroxylase AlkB and the rubredoxins RubA and RubB. Acts by binding to the promoter region of the operon. In addition, EMSA analysis show that AlkX can bind to the promoter region of mmpS1 and mmpL3 and to the intragenic region of mmpL11, suggesting that it may participate in the regulatory network that controls the expression of MmpL lipid transporters. The protein is HTH-type transcriptional regulator AlkX of Mycobacterium tuberculosis (strain ATCC 25618 / H37Rv).